An 893-amino-acid chain; its full sequence is MNEGAGAREIASLTPMMRQYMEVKALHPDSLLFFRLGDFYEMFFEDAVKASEILQITLTARSKGADKVPMCGVPYHAARRYIGRLVSEGLKVAICEQVEEPGNGPGIVRREVTRVITPGMVLDEEVLEPQASNFLAAVSWNDKGWGAALLEASTGEFMALEAPGIAELAESLSRVEPRELLVPDGKRDAPEVAQLLARLVRTPAVAEGEAASFEPTRAAGYLRSHFAVQSLSAFGLDDAPLAAGAAGAALRYLKDTQKTAAAHVDRLSRQERGGNLLMDESSRANLEVLRSLRDGGRKGSLLGVLDKTVTSLGARKLARWLASPLGSLPEIHARLDAVEELSGRSVWREELAGILKEVGDLERLCGRLSLGAGNARDLRALGLSLAQLPRVVAVLARCESPLLKSLTGPLSALPELAELLSRAVAEEPPVTLKDGGMIRAGFHAELDKLVALSTSGKDLLLQIEQREKERTGISSLKVRYNKVFGYYLEVTKSNLDRVPKDYIRKQTTVNSERFVTPELKEYEEQVLTAEERRCALEIQLFEELRAQVVSAAPRIRSAAEAVATGDALLSFARCAAEYGYTRPEVDASVALSITAGRHPVVERMLGAGDSFVPNDVRLDPAEDAQLMVITGPNMAGKSTVMRQVALTALMAQAGSFVPAKAARIGLCDRIFTRVGAADNLARGQSTFMVEMTETSHILHHATNKSLIILDEIGRGTSTFDGLSIAWAVAEHLHDTVGARALFATHYHELVDLARERPRVKNLCVAVKEQNGKVIFLRKLVPGGASRSYGIEVAKLAGLPPEVVGRARELLQNLESGELDDAGRPRVAVRQPQGGRRGASTGQLGLFGMEPAQGGTGVTPAQQKALDALKGASIDRMTPLDALNLLAKLQRELE.

Residue 631-638 (GPNMAGKS) participates in ATP binding. The interval 821 to 858 (AGRPRVAVRQPQGGRRGASTGQLGLFGMEPAQGGTGVT) is disordered.

It belongs to the DNA mismatch repair MutS family.

In terms of biological role, this protein is involved in the repair of mismatches in DNA. It is possible that it carries out the mismatch recognition step. This protein has a weak ATPase activity. The protein is DNA mismatch repair protein MutS of Myxococcus xanthus (strain DK1622).